A 144-amino-acid polypeptide reads, in one-letter code: Large ribosomal subunit protein uL16 (144 aa).

Belongs to the universal ribosomal protein uL16 family. As to quaternary structure, part of the 50S ribosomal subunit.

Functionally, binds 23S rRNA and is also seen to make contacts with the A and possibly P site tRNAs. This is Large ribosomal subunit protein uL16 from Bacillus subtilis (strain 168).